The following is a 69-amino-acid chain: uncharacterized protein (69 aa).

This is an uncharacterized protein from Acheta domesticus (House cricket).